The primary structure comprises 179 residues: Large ribosomal subunit protein uL6 (179 aa).

It belongs to the universal ribosomal protein uL6 family. In terms of assembly, part of the 50S ribosomal subunit.

Its function is as follows. This protein binds to the 23S rRNA, and is important in its secondary structure. It is located near the subunit interface in the base of the L7/L12 stalk, and near the tRNA binding site of the peptidyltransferase center. The protein is Large ribosomal subunit protein uL6 of Pelodictyon phaeoclathratiforme (strain DSM 5477 / BU-1).